The sequence spans 336 residues: Glucokinase (336 aa).

12-17 (ADIGGT) contacts ATP.

It belongs to the bacterial glucokinase family.

It is found in the cytoplasm. It carries out the reaction D-glucose + ATP = D-glucose 6-phosphate + ADP + H(+). In Helicobacter pylori (strain J99 / ATCC 700824) (Campylobacter pylori J99), this protein is Glucokinase.